The primary structure comprises 94 residues: FXYD domain-containing ion transport regulator 6 (94 aa).

A signal peptide spans 1–17 (METVLVLCSLLAPVVLA). Residues 18–34 (SAAEKEKEKDPFYYDYQ) are Extracellular-facing. The helical transmembrane segment at 35–57 (TLRIGGLVFAVVLFSVGILLILS) threads the bilayer. The Cytoplasmic segment spans residues 58 to 94 (RRCKCSFNQKPRAPGDEEAQVENLITTNAAEPQKAEN).

Belongs to the FXYD family. In terms of assembly, regulatory subunit of the sodium/potassium-transporting ATPase which is composed of a catalytic alpha subunit, a non-catalytic beta subunit and an additional regulatory subunit. The regulatory subunit, a member of the FXYD protein family, modulates the enzymatic activity in a tissue- and isoform-specific way by changing affinities of the Na+/K+-ATPase toward Na(+), K(+) or ATP.

The protein resides in the cell membrane. Associates with and regulates the activity of the sodium/potassium-transporting ATPase (NKA) which catalyzes the hydrolysis of ATP coupled with the exchange of Na(+) and K(+) ions across the plasma membrane. Reduces the apparent affinity for intracellular Na(+) with no change in the apparent affinity for extracellular K(+). In addition to modulating NKA kinetics, may also function as a regulator of NKA localization to the plasma membrane. The chain is FXYD domain-containing ion transport regulator 6 (Fxyd6) from Mus musculus (Mouse).